Consider the following 1134-residue polypeptide: Translation initiation factor IF-2 (1134 aa).

Disordered stretches follow at residues 55–465 and 491–524; these read AQKS…HIIG and LARPGKPKASKKSGSKPTGALRKRKKESTRQRQR. Polar residues-rich tracts occupy residues 56–65, 83–105, 137–147, 208–234, and 251–264; these read QKSSNSSSPP, SPPTKSEANAKTNASLDKTSSLK, PSISKNNSLKV, QIKQSSDLINRSPKTSPKQPIQEIQTN, and VQSQFNQKPGNNNL. Basic and acidic residues-rich tracts occupy residues 391–403 and 438–450; these read KRGDLNKGPKKDG and PDWDDAAKLEALR. 2 stretches are compositionally biased toward basic residues: residues 495–504 and 511–524; these read GKPKASKKSG and LRKRKKESTRQRQR. The tr-type G domain maps to 626–798; that stretch reads RRPPVVTVMG…ILLVTEVEDL (173 aa). A G1 region spans residues 635–642; sequence GHVDHGKT. 635-642 is a GTP binding site; it reads GHVDHGKT. Positions 660–664 are G2; the sequence is GITQH. The G3 stretch occupies residues 685–688; it reads DTPG. GTP contacts are provided by residues 685–689 and 739–742; these read DTPGH and NKID. Residues 739 to 742 form a G4 region; the sequence is NKID. Positions 775–777 are G5; it reads SAI.

Belongs to the TRAFAC class translation factor GTPase superfamily. Classic translation factor GTPase family. IF-2 subfamily.

It is found in the cytoplasm. Its function is as follows. One of the essential components for the initiation of protein synthesis. Protects formylmethionyl-tRNA from spontaneous hydrolysis and promotes its binding to the 30S ribosomal subunits. Also involved in the hydrolysis of GTP during the formation of the 70S ribosomal complex. In Prochlorococcus marinus (strain SARG / CCMP1375 / SS120), this protein is Translation initiation factor IF-2.